A 218-amino-acid polypeptide reads, in one-letter code: Small ribosomal subunit protein uS3c (218 aa).

Positions 47-118 constitute a KH type-2 domain; sequence VQKHMRISSG…RLNIAIARVP (72 aa).

The protein belongs to the universal ribosomal protein uS3 family. As to quaternary structure, part of the 30S ribosomal subunit.

Its subcellular location is the plastid. It is found in the chloroplast. This is Small ribosomal subunit protein uS3c (rps3) from Nuphar advena (Common spatterdock).